A 294-amino-acid polypeptide reads, in one-letter code: MDINIDDILAELDKETTAVDSTKITQGSSSTTHRDANTIVGSSLDLNDKTQIYVSPQQDFSDLMKSWKNERCSPELLPYPHQLMKRLLNRISMQSQLIENISMGFLDMQNASNANPPMPNESKLPLLCMETELERLKFVIRSYIRCRLSKIDKFSLYLRQLNEDENSLISLTDLLSKDEIKYHDTHSLIWLKLVNDSILKYMPEELQAINDTEGSVNMIDEPDWNKFVFIHVNGPPDGKWNEDPLLQENEFGKPCYTVTIPDLKEEVELTIGSIYVMRYEVIRDLLRDDKVALI.

The protein belongs to the GINS4/SLD5 family. As to quaternary structure, component of the GINS complex which is a heterotetramer composed of SLD5, PSF1, PSF2 and PSF3. Interacts with PSF2.

It is found in the nucleus. Required for DNA replication. Functions as part of the GINS complex which plays an essential role in the initiation of DNA replication by binding to DNA replication origins and facilitating the assembly of the DNA replication machinery. The protein is DNA replication complex GINS protein SLD5 of Saccharomyces cerevisiae (strain ATCC 204508 / S288c) (Baker's yeast).